The following is a 169-amino-acid chain: Zinc metalloproteinase-disintegrin-like mikarin (169 aa).

The Peptidase M12B domain maps to 14–57; that stretch reads KYLEYVVVDNNMYRNYGNAGPCVMSAEISFEPLQEFSSCDIQEP. A Disintegrin domain is found at 65–129; the sequence is PAVCGNYYVE…PEICTGRSAK (65 aa). Cystine bridges form between Cys68–Cys97, Cys79–Cys92, Cys81–Cys87, Cys105–Cys111, Cys110–Cys123, and Cys150–Cys161. Residues 116 to 118 carry the D/ECD-tripeptide motif; that stretch reads DCD.

The protein belongs to the venom metalloproteinase (M12B) family. P-III subfamily. P-IIIa sub-subfamily. In terms of assembly, monomer. The cofactor is Zn(2+). As to expression, expressed by the venom gland.

It is found in the secreted. Inhibited by EDTA, but not by PMSF. Snake venom zinc metalloproteinase that calcium-independently catalyzes the conversion of prothrombin (F2) to alpha-thrombin through the formation of a thrombin intermediate. The chain is Zinc metalloproteinase-disintegrin-like mikarin from Micropechis ikaheca (New Guinean small-eyed snake).